Here is a 92-residue protein sequence, read N- to C-terminus: RNA-binding protein Hfq (92 aa).

One can recognise a Sm domain in the interval 11 to 71; that stretch reads DRFLNHLRVN…ISTIIPSSYV (61 aa).

Belongs to the Hfq family. As to quaternary structure, homohexamer.

RNA chaperone that binds small regulatory RNA (sRNAs) and mRNAs to facilitate mRNA translational regulation in response to envelope stress, environmental stress and changes in metabolite concentrations. Also binds with high specificity to tRNAs. This chain is RNA-binding protein Hfq, found in Thermotoga maritima (strain ATCC 43589 / DSM 3109 / JCM 10099 / NBRC 100826 / MSB8).